Reading from the N-terminus, the 283-residue chain is Putative F-box protein At1g60370 (283 aa).

One can recognise an F-box domain in the interval 4-53 (GEKLESIPIDLIIEIHSRLPAESVARFRCVSKLWGSMFRRPYFTELFLTR).

The protein is Putative F-box protein At1g60370 of Arabidopsis thaliana (Mouse-ear cress).